The chain runs to 99 residues: Indole-3-acetic acid-induced protein ARG2 (99 aa).

Positions 40–62 are disordered; that stretch reads RGGASIGGNMVPKSGEEKVRGGE. Basic and acidic residues predominate over residues 53 to 62; it reads SGEEKVRGGE.

In Vigna radiata var. radiata (Mung bean), this protein is Indole-3-acetic acid-induced protein ARG2 (ARG2).